The following is a 103-amino-acid chain: MVRYRMRSLSERPHEVHGQQVYGQEQGHNGQEEQGLSPEHVEVYERTHQGYSHHRRRRCSRRRLYRIHRRRHRSCRRRRRRSCRHRRRHRRGCRTRRRRCRRY.

The disordered stretch occupies residues 1-103 (MVRYRMRSLS…RTRRRRCRRY (103 aa)). Residues serine 8 and serine 10 each carry the phosphoserine modification. Positions 8–17 (SLSERPHEVH) are enriched in basic and acidic residues. Over residues 23 to 35 (GQEQGHNGQEEQG) the composition is skewed to low complexity. The residue at position 37 (serine 37) is a Phosphoserine. Residues 39–48 (EHVEVYERTH) are compositionally biased toward basic and acidic residues. Basic residues predominate over residues 51–103 (YSHHRRRRCSRRRLYRIHRRRHRSCRRRRRRSCRHRRRHRRGCRTRRRRCRRY).

It belongs to the protamine P2 family. In terms of assembly, interacts with TDRP. Post-translationally, proteolytic processing into mature chains is required for histone eviction during spermatogenesis. Transition proteins (TNP1 and TNP2) are required for processing. As to expression, testis.

It localises to the nucleus. The protein resides in the chromosome. Protamines substitute for histones in the chromatin of sperm during the haploid phase of spermatogenesis. They compact sperm DNA into a highly condensed, stable and inactive complex. This Semnopithecus entellus (Northern plains gray langur) protein is Protamine-2 (PRM2).